A 132-amino-acid chain; its full sequence is Holo-[acyl-carrier-protein] synthase (132 aa).

The Mg(2+) site is built by Asp-8 and Glu-64.

This sequence belongs to the P-Pant transferase superfamily. AcpS family. The cofactor is Mg(2+).

The protein resides in the cytoplasm. The enzyme catalyses apo-[ACP] + CoA = holo-[ACP] + adenosine 3',5'-bisphosphate + H(+). In terms of biological role, transfers the 4'-phosphopantetheine moiety from coenzyme A to a Ser of acyl-carrier-protein. The protein is Holo-[acyl-carrier-protein] synthase of Shewanella woodyi (strain ATCC 51908 / MS32).